The chain runs to 261 residues: 4-hydroxy-tetrahydrodipicolinate reductase (261 aa).

NAD(+)-binding positions include 13–18 (GMAGRM), 91–93 (GTS), and 115–118 (APNF). Residue His149 is the Proton donor/acceptor of the active site. Position 150 (His150) interacts with (S)-2,3,4,5-tetrahydrodipicolinate. Lys153 acts as the Proton donor in catalysis. 159 to 160 (GT) is a (S)-2,3,4,5-tetrahydrodipicolinate binding site.

The protein belongs to the DapB family.

The protein localises to the cytoplasm. It carries out the reaction (S)-2,3,4,5-tetrahydrodipicolinate + NAD(+) + H2O = (2S,4S)-4-hydroxy-2,3,4,5-tetrahydrodipicolinate + NADH + H(+). The enzyme catalyses (S)-2,3,4,5-tetrahydrodipicolinate + NADP(+) + H2O = (2S,4S)-4-hydroxy-2,3,4,5-tetrahydrodipicolinate + NADPH + H(+). It participates in amino-acid biosynthesis; L-lysine biosynthesis via DAP pathway; (S)-tetrahydrodipicolinate from L-aspartate: step 4/4. Catalyzes the conversion of 4-hydroxy-tetrahydrodipicolinate (HTPA) to tetrahydrodipicolinate. In Granulibacter bethesdensis (strain ATCC BAA-1260 / CGDNIH1), this protein is 4-hydroxy-tetrahydrodipicolinate reductase.